The following is a 423-amino-acid chain: Histidinol dehydrogenase (423 aa).

3 residues coordinate NAD(+): tyrosine 116, glutamine 177, and asparagine 200. Serine 223, glutamine 245, and histidine 248 together coordinate substrate. The Zn(2+) site is built by glutamine 245 and histidine 248. Residues glutamate 313 and histidine 314 each act as proton acceptor in the active site. 4 residues coordinate substrate: histidine 314, aspartate 347, glutamate 401, and histidine 406. Aspartate 347 provides a ligand contact to Zn(2+). Histidine 406 contributes to the Zn(2+) binding site.

The protein belongs to the histidinol dehydrogenase family. Zn(2+) is required as a cofactor.

The catalysed reaction is L-histidinol + 2 NAD(+) + H2O = L-histidine + 2 NADH + 3 H(+). It functions in the pathway amino-acid biosynthesis; L-histidine biosynthesis; L-histidine from 5-phospho-alpha-D-ribose 1-diphosphate: step 9/9. In terms of biological role, catalyzes the sequential NAD-dependent oxidations of L-histidinol to L-histidinaldehyde and then to L-histidine. This chain is Histidinol dehydrogenase, found in Staphylococcus saprophyticus subsp. saprophyticus (strain ATCC 15305 / DSM 20229 / NCIMB 8711 / NCTC 7292 / S-41).